We begin with the raw amino-acid sequence, 493 residues long: Cobyric acid synthase (493 aa).

Residues 261-455 enclose the GATase cobBQ-type domain; it reads HTRIAVVAYP…LHGLFEDAAV (195 aa). Cys-342 functions as the Nucleophile in the catalytic mechanism. The active site involves His-447.

This sequence belongs to the CobB/CobQ family. CobQ subfamily.

Its pathway is cofactor biosynthesis; adenosylcobalamin biosynthesis. Catalyzes amidations at positions B, D, E, and G on adenosylcobyrinic A,C-diamide. NH(2) groups are provided by glutamine, and one molecule of ATP is hydrogenolyzed for each amidation. This chain is Cobyric acid synthase, found in Acidovorax sp. (strain JS42).